Reading from the N-terminus, the 533-residue chain is Beta-glucosidase 22 (533 aa).

An N-terminal signal peptide occupies residues 1–24 (MAVSSSTSTCSSFSLLLLLLLLAA). Asn-41 carries an N-linked (GlcNAc...) asparagine glycan. A beta-D-glucoside-binding positions include Gln-61, His-161, and 206–207 (DE). The active-site Proton donor is the Glu-207. A disulfide bond links Cys-226 and Cys-234. Residues Asn-233 and Asn-238 are each glycosylated (N-linked (GlcNAc...) asparagine). A beta-D-glucoside is bound by residues Tyr-350 and Glu-421. The active-site Nucleophile is Glu-421. N-linked (GlcNAc...) asparagine glycosylation occurs at Asn-435. A beta-D-glucoside-binding residues include Trp-466 and Phe-482.

Belongs to the glycosyl hydrolase 1 family.

It carries out the reaction Hydrolysis of terminal, non-reducing beta-D-glucosyl residues with release of beta-D-glucose.. In Oryza sativa subsp. japonica (Rice), this protein is Beta-glucosidase 22 (BGLU22).